The chain runs to 893 residues: MAELPQSRINERNITSEMRESFLDYAMSVIVSRALPDVRDGLKPVHRRILYGLNEQGMTPDKPYKKSARIVGDVMGKYHPHGDSSIYEAMVRMAQDFSYRYPLVDGQGNFGSMDGDGAAAMRYTEARMTKITLELLRDINKDTIDFIDNYDGNEREPSVLPARFPNLLVNGAAGIAVGMATNIPPHNLTEVIDGVLSLSKNPDITINELMEDIQGPDFPTAGLVLGKSGIRRAYETGRGSIQMRSRAEIEERGGGRQRIVVTEIPFQVNKARMIEKIAELVRDKKIDGITDLRDETSLRTGVRVVIDVRKDANASVILNNLYKQTPLQTSFGVNMIALVNSRPKLINLKEALIHYLEHQKTVVRRRTEYNLKKARDRAHILEGLRIALDHIDEIITTIRESDTDKIAMASLQERFKLTERQAQAILDMRLRRLTGLERDKIESEYNELLEYIKELEEILADEEVLLQLVRDELTEIKERFGDERRTEIQLGGLEDLEDEDLIPEEQIVITLSHNNYIKRLPVSTYRSQNRGGRGIQGMNTLDEDFVSQLVTMSTHDHVLFFTNKGRVYKLKGYEVPELSRQSKGIPIINAIELENDETISTMIAVKDLESEEDYLVFATKQGIVKRSSLSNFSRINKNGKIAINFKEDDELIAVRLTTGNEDILIGTAHASLIRFSESTLRPLGRTAAGVKGISLREGDTVVGLDVADSESEDEVLVVTENGYGKRTPVSEYRLSNRGGKGIKTATITERNGNIVCITTVTGEEDLMVVTNAGVIIRLDVHDISQNGRAAQGVRLMKLGDGQFVSTVAKVNEEDDNEENADEAQQSTTTETADVEEVVDDQTPGNAIHTEGDAEMESVESPENDDRIDIRQDFMDRVNEDIESASDNEEDSDE.

Residues Leu-35–Leu-501 enclose the Topo IIA-type catalytic domain. The active-site O-(5'-phospho-DNA)-tyrosine intermediate is Tyr-123. The GyrA-box signature appears at Gln-528 to Gly-534. Residues Val-810–Glu-893 form a disordered region. Composition is skewed to acidic residues over residues Glu-812–Asp-821 and Asp-852–Glu-862. Basic and acidic residues predominate over residues Asn-863–Glu-879. Acidic residues predominate over residues Asp-880–Glu-893.

Belongs to the type II topoisomerase GyrA/ParC subunit family. In terms of assembly, heterotetramer, composed of two GyrA and two GyrB chains. In the heterotetramer, GyrA contains the active site tyrosine that forms a transient covalent intermediate with DNA, while GyrB binds cofactors and catalyzes ATP hydrolysis.

The protein resides in the cytoplasm. The catalysed reaction is ATP-dependent breakage, passage and rejoining of double-stranded DNA.. In terms of biological role, a type II topoisomerase that negatively supercoils closed circular double-stranded (ds) DNA in an ATP-dependent manner to modulate DNA topology and maintain chromosomes in an underwound state. Negative supercoiling favors strand separation, and DNA replication, transcription, recombination and repair, all of which involve strand separation. Also able to catalyze the interconversion of other topological isomers of dsDNA rings, including catenanes and knotted rings. Type II topoisomerases break and join 2 DNA strands simultaneously in an ATP-dependent manner. This is DNA gyrase subunit A from Staphylococcus epidermidis (strain ATCC 35984 / DSM 28319 / BCRC 17069 / CCUG 31568 / BM 3577 / RP62A).